Consider the following 62-residue polypeptide: Antitoxin VbhA (62 aa).

Positions 20–25 (SQRLEG) match the Inhibitory (S/T)XXXE(G/N) motif motif. Residue E24 participates in ATP binding.

Interacts with VbhT.

Functionally, antitoxin component of type II toxin-antitoxin (TA) system VbhT-VbhA. Acts by inhibiting the adenylyltransferase activity of VbhT; competes with ATP-binding and prevents productive ATP-binding to VbhT. The protein is Antitoxin VbhA of Bartonella schoenbuchensis (strain DSM 13525 / NCTC 13165 / R1).